A 102-amino-acid chain; its full sequence is Large ribosomal subunit protein uL24 (102 aa).

Belongs to the universal ribosomal protein uL24 family. As to quaternary structure, part of the 50S ribosomal subunit.

Its function is as follows. One of two assembly initiator proteins, it binds directly to the 5'-end of the 23S rRNA, where it nucleates assembly of the 50S subunit. Functionally, one of the proteins that surrounds the polypeptide exit tunnel on the outside of the subunit. The polypeptide is Large ribosomal subunit protein uL24 (Rhizobium etli (strain CIAT 652)).